The chain runs to 260 residues: Thiazole synthase (260 aa).

The active-site Schiff-base intermediate with DXP is the lysine 101. Residues glycine 162, 188-189 (AG), and 210-211 (NT) each bind 1-deoxy-D-xylulose 5-phosphate.

Belongs to the ThiG family. Homotetramer. Forms heterodimers with either ThiH or ThiS.

The protein resides in the cytoplasm. It carries out the reaction [ThiS sulfur-carrier protein]-C-terminal-Gly-aminoethanethioate + 2-iminoacetate + 1-deoxy-D-xylulose 5-phosphate = [ThiS sulfur-carrier protein]-C-terminal Gly-Gly + 2-[(2R,5Z)-2-carboxy-4-methylthiazol-5(2H)-ylidene]ethyl phosphate + 2 H2O + H(+). The protein operates within cofactor biosynthesis; thiamine diphosphate biosynthesis. Functionally, catalyzes the rearrangement of 1-deoxy-D-xylulose 5-phosphate (DXP) to produce the thiazole phosphate moiety of thiamine. Sulfur is provided by the thiocarboxylate moiety of the carrier protein ThiS. In vitro, sulfur can be provided by H(2)S. This chain is Thiazole synthase, found in Acidithiobacillus ferrooxidans (strain ATCC 23270 / DSM 14882 / CIP 104768 / NCIMB 8455) (Ferrobacillus ferrooxidans (strain ATCC 23270)).